Consider the following 876-residue polypeptide: Serrate RNA effector molecule homolog (876 aa).

The disordered stretch occupies residues 1-90; sequence MGDSDDEYDR…RRDWDEHSSD (90 aa). Glycine 2 bears the N-acetylglycine mark. At serine 4 the chain carries Phosphoserine. A Phosphotyrosine modification is found at tyrosine 8. Over residues 8-73 the composition is skewed to basic and acidic residues; that stretch reads YDRRRRDKFR…ERFSPPRHEL (66 aa). Residues serine 67, serine 74, and serine 136 each carry the phosphoserine modification. Lysine 150 is covalently cross-linked (Glycyl lysine isopeptide (Lys-Gly) (interchain with G-Cter in SUMO2)). Positions 271-412 are disordered; that stretch reads EEEEEQAGKP…KPKDAAGLEC (142 aa). Basic and acidic residues predominate over residues 297–347; that stretch reads DGERKTNDKDEKKEDGKQAENDSSNDDKTKKSEGDGDKEEKKEDSEKEAKK. A compositionally biased stretch (acidic residues) spans 370–387; it reads SESESESGQAEEEKEEAE. Residues 388-412 are compositionally biased toward basic and acidic residues; the sequence is EALKEKEKPKEEEWEKPKDAAGLEC. Phosphoserine is present on residues serine 493 and serine 540. Threonine 544 bears the Phosphothreonine mark. A Phosphoserine modification is found at serine 570. The segment at 575–598 is disordered; sequence ELLGSSGGAPPEEPPKEGNPAEIN. At threonine 671 the chain carries Phosphothreonine. A Phosphoserine modification is found at serine 679. Residues arginine 833, arginine 840, and arginine 850 each carry the omega-N-methylarginine modification. The interval 835 to 854 is disordered; the sequence is NYDAFRGQGGYPGKPRNRMV.

This sequence belongs to the ARS2 family. As to quaternary structure, interacts with NCBP1 and DROSHA. Interacts with CASP8AP2 and ERBB4. Interacts with LUZP4. Interacts with NCBP2/CBP20 and NCBP3. Interacts with MTREX. Ubiquitously expressed.

The protein resides in the nucleus. The protein localises to the nucleoplasm. Its subcellular location is the cytoplasm. Its function is as follows. Acts as a mediator between the cap-binding complex (CBC) and the primary microRNAs (miRNAs) processing machinery during cell proliferation. Contributes to the stability and delivery of capped primary miRNA transcripts to the primary miRNA processing complex containing DGCR8 and DROSHA, thereby playing a role in RNA-mediated gene silencing (RNAi) by miRNAs. Binds capped RNAs (m7GpppG-capped RNA); however interaction is probably mediated via its interaction with NCBP1/CBP80 component of the CBC complex. Involved in cell cycle progression at S phase. Does not directly confer arsenite resistance but rather modulates arsenic sensitivity. Independently of its activity on miRNAs, necessary and sufficient to promote neural stem cell self-renewal. Does so by directly binding SOX2 promoter and positively regulating its transcription. The polypeptide is Serrate RNA effector molecule homolog (SRRT) (Homo sapiens (Human)).